Here is a 281-residue protein sequence, read N- to C-terminus: Digeranylgeranylglyceryl phosphate synthase (281 aa).

The next 8 helical transmembrane spans lie at 7–27 (ILRP…ALIT), 32–52 (FSVL…NVIN), 72–91 (GRIS…ALAS), 95–117 (FYLG…YYAW), 128–148 (ITIS…LGEV), 193–213 (ISGV…PSLY), 214–234 (LLGI…AVFL), and 258–278 (VGMA…TALT).

The protein belongs to the UbiA prenyltransferase family. DGGGP synthase subfamily. The cofactor is Mg(2+).

It is found in the cell membrane. It carries out the reaction sn-3-O-(geranylgeranyl)glycerol 1-phosphate + (2E,6E,10E)-geranylgeranyl diphosphate = 2,3-bis-O-(geranylgeranyl)-sn-glycerol 1-phosphate + diphosphate. Its pathway is membrane lipid metabolism; glycerophospholipid metabolism. Functionally, prenyltransferase that catalyzes the transfer of the geranylgeranyl moiety of geranylgeranyl diphosphate (GGPP) to the C2 hydroxyl of (S)-3-O-geranylgeranylglyceryl phosphate (GGGP). This reaction is the second ether-bond-formation step in the biosynthesis of archaeal membrane lipids. The polypeptide is Digeranylgeranylglyceryl phosphate synthase (Methanothermobacter thermautotrophicus (strain ATCC 29096 / DSM 1053 / JCM 10044 / NBRC 100330 / Delta H) (Methanobacterium thermoautotrophicum)).